Consider the following 346-residue polypeptide: Small ribosomal subunit biogenesis GTPase RsgA (346 aa).

A disordered region spans residues 1-26; the sequence is MAKRKLTQNQTRRIQSNNAKTLHRHK. The span at 7–20 shows a compositional bias: polar residues; sequence TQNQTRRIQSNNAK. The region spanning 103-271 is the CP-type G domain; sequence ENEISRPDYY…LIDSPGIREF (169 aa). GTP-binding positions include 159-162 and 213-221; these read NKVD and GQSGVGKSS. The Zn(2+) site is built by C295, C300, H302, and C308.

Belongs to the TRAFAC class YlqF/YawG GTPase family. RsgA subfamily. In terms of assembly, monomer. Associates with 30S ribosomal subunit, binds 16S rRNA. Requires Zn(2+) as cofactor.

The protein resides in the cytoplasm. Functionally, one of several proteins that assist in the late maturation steps of the functional core of the 30S ribosomal subunit. Helps release RbfA from mature subunits. May play a role in the assembly of ribosomal proteins into the subunit. Circularly permuted GTPase that catalyzes slow GTP hydrolysis, GTPase activity is stimulated by the 30S ribosomal subunit. In Haemophilus influenzae (strain PittGG), this protein is Small ribosomal subunit biogenesis GTPase RsgA.